The chain runs to 655 residues: Chaperone protein dnaK1 (655 aa).

At T197 the chain carries Phosphothreonine; by autocatalysis.

It belongs to the heat shock protein 70 family.

In terms of biological role, acts as a chaperone. The sequence is that of Chaperone protein dnaK1 (dnaK1) from Synechococcus elongatus (strain ATCC 33912 / PCC 7942 / FACHB-805) (Anacystis nidulans R2).